A 183-amino-acid polypeptide reads, in one-letter code: Apo-citrate lyase phosphoribosyl-dephospho-CoA transferase (183 aa).

It belongs to the CitX family.

The enzyme catalyses apo-[citrate lyase ACP] + 2'-(5''-triphospho-alpha-D-ribosyl)-3'-dephospho-CoA = holo-[citrate lyase ACP] + diphosphate. Functionally, transfers 2-(5''-triphosphoribosyl)-3'-dephosphocoenzyme-A on a serine residue to the apo-acyl carrier protein (gamma chain) of the citrate lyase to yield holo-acyl carrier protein. The chain is Apo-citrate lyase phosphoribosyl-dephospho-CoA transferase from Escherichia coli O7:K1 (strain IAI39 / ExPEC).